The following is a 141-amino-acid chain: Large ribosomal subunit protein uL22 (141 aa).

The disordered stretch occupies residues 108-141 (KSEEKKTVAKKTTTTKAPAKKTTSTKKATVKKES). The span at 117–134 (KKTTTTKAPAKKTTSTKK) shows a compositional bias: low complexity.

This sequence belongs to the universal ribosomal protein uL22 family. In terms of assembly, part of the 50S ribosomal subunit.

In terms of biological role, this protein binds specifically to 23S rRNA; its binding is stimulated by other ribosomal proteins, e.g. L4, L17, and L20. It is important during the early stages of 50S assembly. It makes multiple contacts with different domains of the 23S rRNA in the assembled 50S subunit and ribosome. Functionally, the globular domain of the protein is located near the polypeptide exit tunnel on the outside of the subunit, while an extended beta-hairpin is found that lines the wall of the exit tunnel in the center of the 70S ribosome. The sequence is that of Large ribosomal subunit protein uL22 from Campylobacter jejuni subsp. jejuni serotype O:2 (strain ATCC 700819 / NCTC 11168).